Consider the following 95-residue polypeptide: Aspartyl/glutamyl-tRNA(Asn/Gln) amidotransferase subunit C (95 aa).

The protein belongs to the GatC family. Heterotrimer of A, B and C subunits.

The enzyme catalyses L-glutamyl-tRNA(Gln) + L-glutamine + ATP + H2O = L-glutaminyl-tRNA(Gln) + L-glutamate + ADP + phosphate + H(+). The catalysed reaction is L-aspartyl-tRNA(Asn) + L-glutamine + ATP + H2O = L-asparaginyl-tRNA(Asn) + L-glutamate + ADP + phosphate + 2 H(+). Functionally, allows the formation of correctly charged Asn-tRNA(Asn) or Gln-tRNA(Gln) through the transamidation of misacylated Asp-tRNA(Asn) or Glu-tRNA(Gln) in organisms which lack either or both of asparaginyl-tRNA or glutaminyl-tRNA synthetases. The reaction takes place in the presence of glutamine and ATP through an activated phospho-Asp-tRNA(Asn) or phospho-Glu-tRNA(Gln). The protein is Aspartyl/glutamyl-tRNA(Asn/Gln) amidotransferase subunit C of Pseudomonas putida (strain W619).